We begin with the raw amino-acid sequence, 65 residues long: Large ribosomal subunit protein uL29 (65 aa).

Belongs to the universal ribosomal protein uL29 family.

The polypeptide is Large ribosomal subunit protein uL29 (Xylella fastidiosa (strain Temecula1 / ATCC 700964)).